A 389-amino-acid polypeptide reads, in one-letter code: Teichoic acid glycerol-phosphate transferase (389 aa).

The protein belongs to the CDP-glycerol glycerophosphotransferase family.

It is found in the cell membrane. It carries out the reaction 4-O-[(2R)-glycerylphospho]-N-acetyl-beta-D-mannosaminyl-(1-&gt;4)-N-acetyl-alpha-D-glucosaminyl di-trans,octa-cis-undecaprenyl diphosphate + CDP-glycerol = 4-O-[di(2R)-glycerylphospho]-N-acetyl-beta-D-mannosaminyl-(1-&gt;4)-N-acetyl-alpha-D-glucosaminyl di-trans,octa-cis-undecaprenyl diphosphate + CMP + H(+). It participates in cell wall biogenesis; poly(ribitol phosphate) teichoic acid biosynthesis. Catalyzes the addition of a second glycerol phosphate unit from CDP-glycerol to the prenolpyrophosphate-linked disaccharide, to complete the linkage unit. The protein is Teichoic acid glycerol-phosphate transferase (tarF) of Staphylococcus aureus (strain NCTC 8325 / PS 47).